Consider the following 596-residue polypeptide: Probable protein S-acyltransferase 22 (596 aa).

2 consecutive transmembrane segments (helical) span residues 15 to 35 and 44 to 64; these read VVAVAVFLALGFAFYVFFAPF and IAMGIYTPLITCVVGLYIWCA. The disordered stretch occupies residues 102-125; sequence TGGAKSHDGTCVEDTENGSNKKLE. One can recognise a DHHC domain in the interval 163 to 213; sequence FYCSLCEVEVFKYSKHCRVCDKCVDRFDHHCRWLNNCIGKRNYRKFFSLMV. C193 acts as the S-palmitoyl cysteine intermediate in catalysis. 2 helical membrane-spanning segments follow: residues 215 to 235 and 254 to 274; these read AIFLLIMQWSTGIFVLVLCLL and LIPFVIVVGVCTVLAMLATLP. 3 disordered regions span residues 433–455, 498–523, and 549–596; these read SGRRMFPTKYEGVNNNGKQRRQS, QTSRAMSGSGNVMVTSSPESSLDSHD, and MGQQ…HKSR. Residues 498-518 show a composition bias toward polar residues; the sequence is QTSRAMSGSGNVMVTSSPESS. Residues 549–571 show a composition bias toward low complexity; that stretch reads MGQQRGQQQQQQLSMMMMPLSRS.

The protein belongs to the DHHC palmitoyltransferase family.

It is found in the cell membrane. The protein localises to the cytoplasmic vesicle membrane. The catalysed reaction is L-cysteinyl-[protein] + hexadecanoyl-CoA = S-hexadecanoyl-L-cysteinyl-[protein] + CoA. In terms of biological role, palmitoyl acyltransferase. The polypeptide is Probable protein S-acyltransferase 22 (PAT22) (Arabidopsis thaliana (Mouse-ear cress)).